Consider the following 172-residue polypeptide: Disulfide bond formation protein B (172 aa).

Topologically, residues 1–13 (MIIRLAGMSVRQG) are cytoplasmic. Residues 14 to 30 (CLLGLLMCALMMGVALV) traverse the membrane as a helical segment. Over 31-48 (LQYVYGLTPCPLCIGQRI) the chain is Periplasmic. Cysteines 40 and 43 form a disulfide. A helical membrane pass occupies residues 49 to 65 (AVLLAAFVFAIGALHNP). At 66 to 72 (AGNLGRG) the chain is on the cytoplasmic side. Residues 73–90 (LYAGLAALASVLGLAVAA) form a helical membrane-spanning segment. Residues 91-147 (RHVWLQSLPPENVPSCGPGLDYMMEVLPLWDVLSRVLAGSGECAEIHGSLLGMSIPQ) are Periplasmic-facing. Residues Cys-106 and Cys-133 are joined by a disulfide bond. A helical transmembrane segment spans residues 148 to 166 (WTLLGFAVLLLIPLGMLAG). The Cytoplasmic portion of the chain corresponds to 167-172 (IVIRRR).

It belongs to the DsbB family.

It is found in the cell inner membrane. Its function is as follows. Required for disulfide bond formation in some periplasmic proteins. Acts by oxidizing the DsbA protein. This Chromohalobacter salexigens (strain ATCC BAA-138 / DSM 3043 / CIP 106854 / NCIMB 13768 / 1H11) protein is Disulfide bond formation protein B.